The chain runs to 604 residues: MLKQTIKKWNQSIERYESGNVGEALTILTSIEQSTSKINYNIGVMYIKSNNFRNAIEYFNRSVEQDKYLASSYYMRAIAHHMNGELNHAIVDYDETISKLRGHEYIDYKQLGLDHKLLLAEVLFNKALALGRAGSSVALQATQCFSQPSDSQEFKNQCKKIQDGSQLNFSTRPIPLSLLFKPPKVSDAPQKQRSATTSSIQSSSPSTPMSSSPPSYILKGPSSPPSSSSPSSSSPSLSSSSSPKLPPTPKPSFGSSPPPSSSSSSSSSSSSSSSSISPLTNKTLPPKPPPLPSKKLPSRPISCVIQDVKITLKVFYKDRRLIQIPVPCNLSTFIQKIELKFEITISDKFSLSFQLDGEENEINSQVQLDKMICMEINEINVKDIIPSPSPSPSPSPDKTNNSTSSYSSSSSSSSSSSSSSSSSSYDNKPKSSFIPKTTTRPILPPTTTTTTSTSNNFNRNATLPKKFGSTPSSPSFSSPSSSSSGGGGGPPIPTRGSPSISLLKQQNQTQSINIPPKVPTSSRPKMTQSHSPPSSSPLSSYSTSFQSVSSPSLSSSYNGSTSSYGGFSSSRPPPTPYPYQVLYTDSNEKYYLNTETNETFWELP.

2 TPR repeats span residues 36-69 (SKINYNIGVMYIKSNNFRNAIEYFNRSVEQDKYL) and 71-103 (SSYYMRAIAHHMNGELNHAIVDYDETISKLRGH). Disordered stretches follow at residues 180 to 298 (FKPP…KLPS) and 383 to 581 (DIIP…PYQV). Composition is skewed to low complexity over residues 194-215 (SATTSSIQSSSPSTPMSSSPPS) and 225-243 (PSSSSPSSSSPSLSSSSSP). Residues 244-260 (KLPPTPKPSFGSSPPPS) are compositionally biased toward pro residues. Residues 261-284 (SSSSSSSSSSSSSSSISPLTNKTL) are compositionally biased toward low complexity. Residues 309 to 384 (KITLKVFYKD…EINEINVKDI (76 aa)) enclose the PB1 domain. Low complexity-rich tracts occupy residues 396 to 424 (PDKTNNSTSSYSSSSSSSSSSSSSSSSSS), 435 to 453 (PKTTTRPILPPTTTTTTST), and 467 to 483 (FGSTPSSPSFSSPSSSS). Residues 502-528 (LLKQQNQTQSINIPPKVPTSSRPKMTQ) are compositionally biased toward polar residues. Residues 529 to 570 (SHSPPSSSPLSSYSTSFQSVSSPSLSSSYNGSTSSYGGFSSS) are compositionally biased toward low complexity. The WW domain occupies 573–604 (PPTPYPYQVLYTDSNEKYYLNTETNETFWELP).

Functionally, may function as an activator of NOX1, a superoxide-producing NADPH oxidase. The chain is NADPH oxidase activator (ncfA) from Dictyostelium discoideum (Social amoeba).